A 121-amino-acid chain; its full sequence is B-box domain protein 31 (121 aa).

A B box-type; atypical zinc finger spans residues 26 to 72 (SVPVRCELCDGDASVFCEADSAFLCRKCDRWVHGANFLAWRHVRRVL). The PFVFL signature appears at 117-121 (PFVFL).

As to expression, highly expressed in shoot apical meristems and in vascular tissues of leaves. Also detected in petioles.

Functionally, developmental regulator acting by forming heterodimeric complexes, that sequester CO and CO-like (COL) proteins into non-functional complexes. Involved in the CO-mediated long-day flowering-promotion pathway. Engages CO and the transcriptional repressor TPL in a tripartite complex. In Arabidopsis thaliana (Mouse-ear cress), this protein is B-box domain protein 31.